Here is a 65-residue protein sequence, read N- to C-terminus: Light-harvesting protein B800/830/1020 alpha-2 chain (65 aa).

Over 1 to 13 (MWKLWKFVDFRMT) the chain is Cytoplasmic. The helical transmembrane segment at 14–34 (AVGFHIFFALIAFAVHFACIS) threads the bilayer. H29 provides a ligand contact to a bacteriochlorophyll. Residues 35–65 (SERFNWLEGAPAAEYYMDENPGIWKRTSYDG) are Periplasmic-facing.

The protein belongs to the antenna complex alpha subunit family. In terms of assembly, the core complex is formed by different alpha and beta chains, binding bacteriochlorophyll molecules, and arranged most probably in tetrameric structures disposed around the reaction center. The non-pigmented gamma chains may constitute additional components.

It is found in the cell inner membrane. Its function is as follows. Antenna complexes are light-harvesting systems, which transfer the excitation energy to the reaction centers. The polypeptide is Light-harvesting protein B800/830/1020 alpha-2 chain (Halorhodospira halochloris (Ectothiorhodospira halochloris)).